The primary structure comprises 251 residues: Azurocidin (251 aa).

The signal sequence occupies residues Met-1–Ala-19. The propeptide at Gly-20–Asp-26 is removed in mature form. Positions Leu-25–Asp-26 are cleaved as a propeptide — dipeptide found in non-mature form. The Peptidase S1 domain occupies Ile-27–Asn-244. Residues Asn-46 to Gln-70 form a possesses antibiotic activity region. The cysteines at positions 52 and 68 are disulfide-linked. Asn-126 carries an N-linked (GlcNAc...) asparagine; partial glycan. Asn-140 carries N-linked (GlcNAc...) asparagine glycosylation. Disulfide bonds link Cys-149–Cys-207, Cys-180–Cys-186, and Cys-197–Cys-222. An N-linked (GlcNAc...) asparagine; partial glycan is attached at Asn-171. A propeptide spans Gly-249–Ala-251 (removed in mature form).

It belongs to the peptidase S1 family. Elastase subfamily. Cleavage of the N-terminal propeptide which is composed of 7 amino acids occurs in two steps. The initial cleavage of 5 amino acids is followed by the cleavage of a dipeptide to produce the mature form.

It localises to the cytoplasmic granule membrane. Its function is as follows. This is a neutrophil granule-derived antibacterial and monocyte- and fibroblast-specific chemotactic glycoprotein. Binds heparin. The cytotoxic action is limited to many species of Gram-negative bacteria; this specificity may be explained by a strong affinity of the very basic N-terminal half for the negatively charged lipopolysaccharides that are unique to the Gram-negative bacterial outer envelope. It may play a role in mediating recruitment of monocytes in the second wave of inflammation. Has antibacterial activity against the Gram-negative bacterium P.aeruginosa, this activity is inhibited by LPS from P.aeruginosa. Acting alone, it does not have antimicrobial activity against the Gram-negative bacteria A.actinomycetemcomitans ATCC 29532, A.actinomycetemcomitans NCTC 9709, A.actinomycetemcomitans FDC-Y4, H.aphrophilus ATCC 13252, E.corrodens ATCC 23834, C.sputigena ATCC 33123, Capnocytophaga sp ATCC 33124, Capnocytophaga sp ATCC 27872 or E.coli ML-35. Has antibacterial activity against C.sputigena ATCC 33123 when acting synergistically with either elastase or cathepsin G. The protein is Azurocidin of Homo sapiens (Human).